The sequence spans 377 residues: Nitric oxide reductase FlRd-NAD(+) reductase (377 aa).

The protein belongs to the FAD-dependent oxidoreductase family. FAD is required as a cofactor.

It localises to the cytoplasm. It carries out the reaction 2 reduced [nitric oxide reductase rubredoxin domain] + NAD(+) + H(+) = 2 oxidized [nitric oxide reductase rubredoxin domain] + NADH. It functions in the pathway nitrogen metabolism; nitric oxide reduction. Functionally, one of at least two accessory proteins for anaerobic nitric oxide (NO) reductase. Reduces the rubredoxin moiety of NO reductase. The protein is Nitric oxide reductase FlRd-NAD(+) reductase of Escherichia coli O45:K1 (strain S88 / ExPEC).